A 388-amino-acid chain; its full sequence is Succinate--CoA ligase [ADP-forming] subunit beta (388 aa).

Residues 9-244 form the ATP-grasp domain; sequence KEILRKFGVA…LDEEDPAEIE (236 aa). Residues Lys-46, 53–55, Glu-99, Ala-102, and Glu-107 contribute to the ATP site; that span reads GRG. Residues Asn-199 and Asp-213 each contribute to the Mg(2+) site. Substrate-binding positions include Asn-264 and 321–323; that span reads GIM.

It belongs to the succinate/malate CoA ligase beta subunit family. As to quaternary structure, heterotetramer of two alpha and two beta subunits. Requires Mg(2+) as cofactor.

It carries out the reaction succinate + ATP + CoA = succinyl-CoA + ADP + phosphate. The enzyme catalyses GTP + succinate + CoA = succinyl-CoA + GDP + phosphate. It participates in carbohydrate metabolism; tricarboxylic acid cycle; succinate from succinyl-CoA (ligase route): step 1/1. In terms of biological role, succinyl-CoA synthetase functions in the citric acid cycle (TCA), coupling the hydrolysis of succinyl-CoA to the synthesis of either ATP or GTP and thus represents the only step of substrate-level phosphorylation in the TCA. The beta subunit provides nucleotide specificity of the enzyme and binds the substrate succinate, while the binding sites for coenzyme A and phosphate are found in the alpha subunit. This is Succinate--CoA ligase [ADP-forming] subunit beta from Burkholderia thailandensis (strain ATCC 700388 / DSM 13276 / CCUG 48851 / CIP 106301 / E264).